Here is a 353-residue protein sequence, read N- to C-terminus: Photosystem II protein D1 (353 aa).

T2 bears the N-acetylthreonine mark. T2 bears the Phosphothreonine mark. Transmembrane regions (helical) follow at residues 29 to 46 (YIGWFGVLMIPLLLTATS), 118 to 133 (HFLLGVCCYMGREWEL), and 142 to 156 (WIAVAYSAPVAAATA). H118 serves as a coordination point for chlorophyll a. Y126 provides a ligand contact to pheophytin a. 2 residues coordinate [CaMn4O5] cluster: D170 and E189. Residues 197-218 (FHMLGVAGVFGGSLFSAMHGSL) form a helical membrane-spanning segment. H198 provides a ligand contact to chlorophyll a. Residues H215 and 264 to 265 (SF) each bind a quinone. H215 provides a ligand contact to Fe cation. H272 serves as a coordination point for Fe cation. Residues 274 to 288 (FLAAWPVIGIWFTAL) form a helical membrane-spanning segment. The [CaMn4O5] cluster site is built by H332, E333, D342, and A344. Residues 345 to 353 (SVEAPSVNG) constitute a propeptide that is removed on maturation.

The protein belongs to the reaction center PufL/M/PsbA/D family. PSII is composed of 1 copy each of membrane proteins PsbA, PsbB, PsbC, PsbD, PsbE, PsbF, PsbH, PsbI, PsbJ, PsbK, PsbL, PsbM, PsbT, PsbX, PsbY, PsbZ, Psb30/Ycf12, at least 3 peripheral proteins of the oxygen-evolving complex and a large number of cofactors. It forms dimeric complexes. The D1/D2 heterodimer binds P680, chlorophylls that are the primary electron donor of PSII, and subsequent electron acceptors. It shares a non-heme iron and each subunit binds pheophytin, quinone, additional chlorophylls, carotenoids and lipids. D1 provides most of the ligands for the Mn4-Ca-O5 cluster of the oxygen-evolving complex (OEC). There is also a Cl(-1) ion associated with D1 and D2, which is required for oxygen evolution. The PSII complex binds additional chlorophylls, carotenoids and specific lipids. serves as cofactor. Post-translationally, tyr-161 forms a radical intermediate that is referred to as redox-active TyrZ, YZ or Y-Z. C-terminally processed by CTPA; processing is essential to allow assembly of the oxygen-evolving complex and thus photosynthetic growth.

It is found in the plastid. The protein localises to the chloroplast thylakoid membrane. The catalysed reaction is 2 a plastoquinone + 4 hnu + 2 H2O = 2 a plastoquinol + O2. In terms of biological role, photosystem II (PSII) is a light-driven water:plastoquinone oxidoreductase that uses light energy to abstract electrons from H(2)O, generating O(2) and a proton gradient subsequently used for ATP formation. It consists of a core antenna complex that captures photons, and an electron transfer chain that converts photonic excitation into a charge separation. The D1/D2 (PsbA/PsbD) reaction center heterodimer binds P680, the primary electron donor of PSII as well as several subsequent electron acceptors. This Chlorokybus atmophyticus (Soil alga) protein is Photosystem II protein D1.